Reading from the N-terminus, the 281-residue chain is Putative glutamine amidotransferase-like protein RP404 (281 aa).

One can recognise a Glutamine amidotransferase type-1 domain in the interval 19–281 (KYTYADFPWY…KALVKASKYI (263 aa)). The RPE1 insert domain maps to 139–174 (RHFSKLTYSKKFECNTEAFATTVYTLPIKLEFENAP).

The polypeptide is Putative glutamine amidotransferase-like protein RP404 (Rickettsia prowazekii (strain Madrid E)).